A 239-amino-acid chain; its full sequence is tRNA1(Val) (adenine(37)-N6)-methyltransferase (239 aa).

This sequence belongs to the methyltransferase superfamily. tRNA (adenine-N(6)-)-methyltransferase family.

The protein resides in the cytoplasm. It catalyses the reaction adenosine(37) in tRNA1(Val) + S-adenosyl-L-methionine = N(6)-methyladenosine(37) in tRNA1(Val) + S-adenosyl-L-homocysteine + H(+). In terms of biological role, specifically methylates the adenine in position 37 of tRNA(1)(Val) (anticodon cmo5UAC). This is tRNA1(Val) (adenine(37)-N6)-methyltransferase from Vibrio vulnificus (strain CMCP6).